The chain runs to 106 residues: Large ribosomal subunit protein uL24 (106 aa).

The protein belongs to the universal ribosomal protein uL24 family. As to quaternary structure, part of the 50S ribosomal subunit.

Functionally, one of two assembly initiator proteins, it binds directly to the 5'-end of the 23S rRNA, where it nucleates assembly of the 50S subunit. In terms of biological role, one of the proteins that surrounds the polypeptide exit tunnel on the outside of the subunit. The polypeptide is Large ribosomal subunit protein uL24 (Acidovorax sp. (strain JS42)).